The sequence spans 223 residues: Translation initiation factor 6 (223 aa).

It belongs to the eIF-6 family.

Binds to the 50S ribosomal subunit and prevents its association with the 30S ribosomal subunit to form the 70S initiation complex. In Methanobrevibacter smithii (strain ATCC 35061 / DSM 861 / OCM 144 / PS), this protein is Translation initiation factor 6.